The primary structure comprises 107 residues: Integration host factor subunit beta (107 aa).

The disordered stretch occupies residues Arg-55–Gln-107. Residues Lys-65–Asp-101 are compositionally biased toward basic and acidic residues.

It belongs to the bacterial histone-like protein family. As to quaternary structure, heterodimer of an alpha and a beta chain.

Its function is as follows. This protein is one of the two subunits of integration host factor, a specific DNA-binding protein that functions in genetic recombination as well as in transcriptional and translational control. The chain is Integration host factor subunit beta from Burkholderia pseudomallei (strain K96243).